The chain runs to 263 residues: Hydroxyacylglutathione hydrolase (263 aa).

Residues His55, His57, Asp59, His60, His117, Asp134, and His172 each contribute to the Zn(2+) site.

It belongs to the metallo-beta-lactamase superfamily. Glyoxalase II family. In terms of assembly, monomer. Zn(2+) serves as cofactor.

The catalysed reaction is an S-(2-hydroxyacyl)glutathione + H2O = a 2-hydroxy carboxylate + glutathione + H(+). Its pathway is secondary metabolite metabolism; methylglyoxal degradation; (R)-lactate from methylglyoxal: step 2/2. Its function is as follows. Thiolesterase that catalyzes the hydrolysis of S-D-lactoyl-glutathione to form glutathione and D-lactic acid. This is Hydroxyacylglutathione hydrolase from Shewanella baltica (strain OS155 / ATCC BAA-1091).